Here is a 440-residue protein sequence, read N- to C-terminus: 3-phosphoshikimate 1-carboxyvinyltransferase (440 aa).

Positions 19, 20, and 24 each coordinate 3-phosphoshikimate. Position 19 (Lys-19) interacts with phosphoenolpyruvate. The phosphoenolpyruvate site is built by Gly-92 and Arg-121. Residues Ser-166, Gln-168, Asp-315, and Lys-342 each contribute to the 3-phosphoshikimate site. Gln-168 lines the phosphoenolpyruvate pocket. Asp-315 serves as the catalytic Proton acceptor. Phosphoenolpyruvate contacts are provided by Arg-346 and Arg-399.

It belongs to the EPSP synthase family. In terms of assembly, monomer.

It is found in the cytoplasm. It carries out the reaction 3-phosphoshikimate + phosphoenolpyruvate = 5-O-(1-carboxyvinyl)-3-phosphoshikimate + phosphate. It functions in the pathway metabolic intermediate biosynthesis; chorismate biosynthesis; chorismate from D-erythrose 4-phosphate and phosphoenolpyruvate: step 6/7. Functionally, catalyzes the transfer of the enolpyruvyl moiety of phosphoenolpyruvate (PEP) to the 5-hydroxyl of shikimate-3-phosphate (S3P) to produce enolpyruvyl shikimate-3-phosphate and inorganic phosphate. The protein is 3-phosphoshikimate 1-carboxyvinyltransferase of Leptospira borgpetersenii serovar Hardjo-bovis (strain JB197).